The chain runs to 293 residues: Single-pass membrane and coiled-coil domain-containing protein 2 (293 aa).

Positions 116–188 form a coiled coil; it reads KNLLEFLLKD…SAKLRMYQME (73 aa). A helical transmembrane segment spans residues 234–254; sequence IFIMFYVLTVTGLLCYILFFG.

Its subcellular location is the membrane. The protein is Single-pass membrane and coiled-coil domain-containing protein 2 (SMCO2) of Macaca fascicularis (Crab-eating macaque).